Here is a 59-residue protein sequence, read N- to C-terminus: Conorfamide-Vc1 (59 aa).

A signal peptide spans 1–19 (MSGRGFLLLALLLLVTVEA). Residues 20-25 (TKVEKK) constitute a propeptide that is removed on maturation. The interval 32–39 (AWSGPRNR) is positively charged region crucial for activity against MRGPRX1 receptors. Residue F43 is modified to Phenylalanine amide. Positions 45–59 (RRDMQSPLLSERLRL) are excised as a propeptide.

The protein belongs to the FARP (FMRFamide related peptide) family. Expressed by the venom duct.

It localises to the secreted. This peptide activates human and mouse sensory neuron-specific G-protein coupled receptors MRGPRX1. The activity on human receptors has been measured (EC(50)=1.8 uM). Compared with the agonist chloroquine (anti-malaria drug), it is 200-fold more potent. The peptide also causes an increase in cytosolic calcium in a specific subset of DRG neurons, and, in contrast to other Conus venom peptides, the peptide also affects a large fraction of the non-neuronal cells. In vivo, when intracranially injected into mice, it principally renders mice unable to move, and at very low doses, it causes hyperactivity. It also induces itch sensation, since intradermal cheek injection into humanized transgenic mouse (mouse MRGPRX1 replaced by human MRGPRX1) induces scratching. In vivo, when tested at high doses (10 uM) on zebrafish larvae, it induces a range of behavioral effects ranging from an early hypoactivity during the first hour of treatment to an increase in movement during the following hours when the larvae are submitted to strobe light phases. This Conus victoriae (Queen Victoria cone) protein is Conorfamide-Vc1.